The following is a 1132-amino-acid chain: Ubiquitin carboxyl-terminal hydrolase 43 (1132 aa).

The segment at Met1 to Leu103 is disordered. Positions Arg17–Leu28 are enriched in basic residues. Composition is skewed to low complexity over residues Asn29–Ser44 and Phe63–Gly78. Residues Gln101–Arg710 form the USP domain. Catalysis depends on Cys110, which acts as the Nucleophile. The active-site Proton acceptor is His668. Asymmetric dimethylarginine is present on Arg746. Disordered regions lie at residues Arg839–Pro891, Thr935–Gly1008, Arg1024–Leu1044, and Arg1057–Ile1106. Positions Gly941–Gly950 are enriched in basic and acidic residues. Low complexity predominate over residues Gly958–Ser967. Ser970 carries the phosphoserine modification. The span at Ala994–Gly1006 shows a compositional bias: basic and acidic residues.

Belongs to the peptidase C19 family.

The catalysed reaction is Thiol-dependent hydrolysis of ester, thioester, amide, peptide and isopeptide bonds formed by the C-terminal Gly of ubiquitin (a 76-residue protein attached to proteins as an intracellular targeting signal).. In terms of biological role, may recognize and hydrolyze the peptide bond at the C-terminal Gly of ubiquitin. Involved in the processing of poly-ubiquitin precursors as well as that of ubiquitinated proteins. The chain is Ubiquitin carboxyl-terminal hydrolase 43 (Usp43) from Mus musculus (Mouse).